Reading from the N-terminus, the 236-residue chain is 2-C-methyl-D-erythritol 4-phosphate cytidylyltransferase (236 aa).

This sequence belongs to the IspD/TarI cytidylyltransferase family. IspD subfamily.

The enzyme catalyses 2-C-methyl-D-erythritol 4-phosphate + CTP + H(+) = 4-CDP-2-C-methyl-D-erythritol + diphosphate. It functions in the pathway isoprenoid biosynthesis; isopentenyl diphosphate biosynthesis via DXP pathway; isopentenyl diphosphate from 1-deoxy-D-xylulose 5-phosphate: step 2/6. Catalyzes the formation of 4-diphosphocytidyl-2-C-methyl-D-erythritol from CTP and 2-C-methyl-D-erythritol 4-phosphate (MEP). The polypeptide is 2-C-methyl-D-erythritol 4-phosphate cytidylyltransferase (Pseudomonas syringae pv. tomato (strain ATCC BAA-871 / DC3000)).